Here is an 85-residue protein sequence, read N- to C-terminus: Probable oxaloacetate decarboxylase gamma chain (85 aa).

Residues 11–33 (AAALMVTGMGVVFIFLTILIFLV) form a helical membrane-spanning segment.

It belongs to the OadG family. In terms of assembly, heterotrimer of an alpha, a beta and a gamma subunit. Na(+) is required as a cofactor.

The protein localises to the cell membrane. The enzyme catalyses oxaloacetate + 2 Na(+)(in) + H(+) = pyruvate + 2 Na(+)(out) + CO2. Its function is as follows. Catalyzes the decarboxylation of oxaloacetate coupled to Na(+) translocation. This is Probable oxaloacetate decarboxylase gamma chain from Vibrio vulnificus (strain CMCP6).